Consider the following 394-residue polypeptide: MAADGTGVVGGGAVGGPLSKDGLLDAKCPEPIPNRRRSSSLSRDAQRRAYQWCREYLGGAWRRARPEELSVCPVSGGLSNLLFRCSLPNHVPSMGGEPREVLLRLYGAILQGVDSLVLESVMFAILAERSLGPQLYGVFPEGRLEQYLPSRPLKTQELRDPVLSGAIATKMARFHGMEMPFTKEPRWLFGTMERYLKQIQDLPSTSLPQMNLVEMYSLKDEMNHLRTLLDATPSPVVFCHNDIQEGNILLLSEPDSDDNLMLVDFEYSSYNYRGFDIGNHFCEWVYDYTYEEWPFYKARPADYPTREQQLLFIRHYLAEVQKGEVLSEEEQKKQEEDLLIEISRYALASHFFWGLWSTLQASMSTIEFGYLEYAQSRFQFYFQQKGQLTSFLSP.

Residue alanine 2 is modified to N-acetylalanine. Positions 22–42 (GLLDAKCPEPIPNRRRSSSLS) are disordered. Residues 75 to 81 (SGGLSNL), arginine 104, 146 to 152 (QYLPSRP), glutamine 244, and aspartate 264 contribute to the ATP site. Residue 77–79 (GLS) coordinates substrate.

The protein belongs to the choline/ethanolamine kinase family. As to quaternary structure, homodimer, and heterodimer with CHKA.

The enzyme catalyses choline + ATP = phosphocholine + ADP + H(+). It catalyses the reaction ethanolamine + ATP = phosphoethanolamine + ADP + H(+). The protein operates within phospholipid metabolism; phosphatidylethanolamine biosynthesis; phosphatidylethanolamine from ethanolamine: step 1/3. Has a key role in phospholipid metabolism, and catalyzes the first step of phosphatidylethanolamine and phosphatidylcholine biosynthesis. The protein is Choline/ethanolamine kinase (Chkb) of Rattus norvegicus (Rat).